A 328-amino-acid polypeptide reads, in one-letter code: Homeobox protein Hox-D1 (328 aa).

The Antp-type hexapeptide motif lies at 204 to 209 (TFEWMK). A DNA-binding region (homeobox) is located at residues 229–288 (SSAIRTNFSTKQLTELEKEFHFNKYLTRARRIEIANCLHLNDTQVKIWFQNRRMKQKKRE). A disordered region spans residues 305-328 (PLSGTTPTKFIKNPGSPSQSQEPS). Over residues 319–328 (GSPSQSQEPS) the composition is skewed to polar residues.

This sequence belongs to the Antp homeobox family. Labial subfamily.

It is found in the nucleus. Functionally, sequence-specific transcription factor which is part of a developmental regulatory system that provides cells with specific positional identities on the anterior-posterior axis. Acts on the anterior body structures. The chain is Homeobox protein Hox-D1 (HOXD1) from Homo sapiens (Human).